The primary structure comprises 214 residues: ATP synthase subunit 5, mitochondrial (214 aa).

Residues 1–24 (MFASRAIRMMSMRPMARTMATKAA) constitute a mitochondrion transit peptide.

As to quaternary structure, F-type ATP synthases have 2 components, the catalytic core F(1) and the membrane-embedded component F(0), linked together by a central stalk and a peripheral stalk. The central stalk, also called rotor shaft, is often seen as part of F(1). The peripheral stalk is seen as part of F(0). F(0) contains the membrane channel next to the rotor. F-type ATP synthases form dimers but each monomer functions independently in ATP generation. The dimer consists of 17 different polypeptides: ATP1 (subunit alpha, 3 molecules per monomer, part of F(1)), ATP2 (subunit beta, 3 copies per monomer, part of F(1)), ATP3 (subunit gamma, part of the central stalk), ATP4 (subunit b, part of the peripheral stalk), ATP5/OSCP (subunit 5/OSCP, part of the peripheral stalk), ATP6 (subunit a, part of the peripheral stalk), ATP7 (subunit d, part of the peripheral stalk), ATP8 (subunit 8, part of the peripheral stalk), OLI1 (subunit c, part of the rotor, 10 molecules per monomer), ATP14 (subunit h, part of the peripheral stalk), ATP15 (subunit epsilon, part of the central stalk), ATP16 (subunit delta, part of the central stalk), ATP17 (subunit f, part of the peripheral stalk), ATP18 (subunit i/j, part of the peripheral stalk), ATP19 (subunit k, dimer-specific, at interface between monomers), ATP20 (subunit g, at interface between monomers), TIM11 (subunit e, at interface between monomers).

It is found in the mitochondrion inner membrane. Its function is as follows. Mitochondrial membrane ATP synthase (F(1)F(0) ATP synthase or Complex V) produces ATP from ADP in the presence of a proton gradient across the membrane which is generated by electron transport complexes of the respiratory chain. F-type ATP synthases consist of two structural domains, F(1) - containing the extramembraneous catalytic core, and F(0) - containing the membrane proton channel, linked together by a central stalk and a peripheral stalk. During catalysis, ATP synthesis in the catalytic domain of F(1) is coupled via a rotary mechanism of the central stalk subunits to proton translocation. Part of the complex F(0) domain and the peripheral stalk, which acts as a stator to hold the catalytic alpha/ATP1(3)beta/ATP2(3) subcomplex and subunit a/ATP6 static relative to the rotary elements. The chain is ATP synthase subunit 5, mitochondrial from Yarrowia lipolytica (strain CLIB 122 / E 150) (Yeast).